Here is a 138-residue protein sequence, read N- to C-terminus: Basic phospholipase A2 homolog bothropstoxin-II (138 aa).

The N-terminal stretch at 1-16 (MRTLWIMAVLLVGVEG) is a signal peptide. Disulfide bonds link Cys-42/Cys-131, Cys-44/Cys-60, Cys-59/Cys-111, Cys-65/Cys-138, Cys-66/Cys-104, Cys-73/Cys-97, and Cys-91/Cys-102. The interval 121-133 (KRYMAYPDVLCKK) is important for membrane-damaging activities in eukaryotes and bacteria; heparin-binding.

Belongs to the phospholipase A2 family. Group II subfamily. D49 sub-subfamily. Homodimer; non-covalently linked (probable alternative/compact dimer conformation). In terms of tissue distribution, expressed by the venom gland.

The protein resides in the secreted. Snake venom phospholipase A2 (PLA2) that shows low enzymatic activity even tough it conserves the catalytic residues. Shows a strong myotoxic activity and induces indirect hemolysis, anticoagulant properties, and cytotoxic activities. In vivo, it induces muscle necrosis, accompanied by polymorphonuclear cell infiltration, and edema in the mouse paw. It exerts its function even in the absence of extracellular calcium, indicating it is not a calcium-dependent enzyme. A model of myotoxic mechanism has been proposed: an apo Lys49-PLA2 is activated by the entrance of a hydrophobic molecule (e.g. fatty acid) at the hydrophobic channel of the protein leading to a reorientation of a monomer. This reorientation causes a transition between 'inactive' to 'active' states, causing alignment of C-terminal and membrane-docking sites (MDoS) side-by-side and putting the membrane-disruption sites (MDiS) in the same plane, exposed to solvent and in a symmetric position for both monomers. The MDoS region stabilizes the toxin on membrane by the interaction of charged residues with phospholipid head groups. Subsequently, the MDiS region destabilizes the membrane with penetration of hydrophobic residues. This insertion causes a disorganization of the membrane, allowing an uncontrolled influx of ions (i.e. calcium and sodium), and eventually triggering irreversible intracellular alterations and cell death. The polypeptide is Basic phospholipase A2 homolog bothropstoxin-II (Bothrops jararacussu (Jararacussu)).